Reading from the N-terminus, the 349-residue chain is Phosphorylcholine phosphatase (349 aa).

Residues 1 to 22 (MTFAKGILAALALAAAVGQASA) form the signal peptide. Asp53 serves as the catalytic Nucleophile. Mg(2+) is bound by residues Asp53 and Asp55. Asp55 serves as the catalytic Proton donor. Cys109 and Cys116 are oxidised to a cystine. Residue Asp284 participates in Mg(2+) binding.

This sequence belongs to the HAD-like hydrolase superfamily. Monomer. Homodimer. Homotetramer. Requires Mg(2+) as cofactor.

It is found in the periplasm. It catalyses the reaction phosphocholine + H2O = choline + phosphate. It carries out the reaction phosphoethanolamine + H2O = ethanolamine + phosphate. Its activity is regulated as follows. Activity is inhibited by high concentrations of phosphorylcholine, phosphorylethanolamine, choline or betaine. Displays different properties depending on the substrate utilized, the pH conditions as well as the presence or absence of metal ions. At pH 5, activity is inhibited by Al(3+) ions. At pH 7.4, the enzyme cannot catalyze the hydrolysis of pNPP, phosphorylethanolamine is a poor substrate in either the presence or absence of divalent cations, and activity measured with phosphorylcholine is independent of divalent cations or is not inhibited by Al(3+) ions. Mg(2+) produces identical activation at pH 5.0 and 7.4, but Zn(2+) is an activator at pH 5.0 and becomes an inhibitor at pH 7.4. This inhibition at pH 7.4 may be due to a transition from octahedral to tetrahedral coordination geometry, which is produced by hydrolysis of the Zn-hexacoordinated complex. Its function is as follows. Catalyzes the hydrolysis of phosphorylcholine (PCho) to produce choline and inorganic phosphate. Can also hydrolyze phosphorylethanolamine and the nonphysiological substrate p-nitrophenylphosphate (pNPP). Shows higher affinity and catalytic efficiency with phosphorylcholine as substrate. In terms of biological role, is probably involved in virulence. The bacteria may break down various host compounds or host cell membranes through the coordinated action of phospholipase C and phosphocholine phosphatase. The final consequence of the action of these enzymes is an increase of the free choline concentration, which may promote the pathogenicity of P.aeruginosa. This Pseudomonas aeruginosa (strain ATCC 15692 / DSM 22644 / CIP 104116 / JCM 14847 / LMG 12228 / 1C / PRS 101 / PAO1) protein is Phosphorylcholine phosphatase.